The sequence spans 383 residues: Spermidine/putrescine import ATP-binding protein PotA (383 aa).

An ABC transporter domain is found at 12-246; that stretch reads IALRDISKVY…PSTPFVAGFI (235 aa). Position 48–55 (48–55) interacts with ATP; it reads GPSGCGKT.

The protein belongs to the ABC transporter superfamily. Spermidine/putrescine importer (TC 3.A.1.11.1) family. In terms of assembly, the complex is composed of two ATP-binding proteins (PotA), two transmembrane proteins (PotB and PotC) and a solute-binding protein (PotD).

Its subcellular location is the cell membrane. The catalysed reaction is ATP + H2O + polyamine-[polyamine-binding protein]Side 1 = ADP + phosphate + polyamineSide 2 + [polyamine-binding protein]Side 1.. Functionally, part of the ABC transporter complex PotABCD involved in spermidine/putrescine import. Responsible for energy coupling to the transport system. In Acidothermus cellulolyticus (strain ATCC 43068 / DSM 8971 / 11B), this protein is Spermidine/putrescine import ATP-binding protein PotA.